A 23-amino-acid chain; its full sequence is TTPQEVLSRIKDQGIKLIDLKFI.

It belongs to the glutamine synthetase family. Oligomer of 12 subunits arranged in the form of two hexagons. The cofactor is Mg(2+).

It is found in the cytoplasm. The enzyme catalyses L-glutamate + NH4(+) + ATP = L-glutamine + ADP + phosphate + H(+). The activity of this enzyme could be controlled by adenylation under conditions of abundant glutamine. Functionally, involved in nitrogen metabolism via ammonium assimilation. Catalyzes the ATP-dependent biosynthesis of glutamine from glutamate and ammonia. This is Glutamine synthetase from Phormidium lapideum.